The primary structure comprises 325 residues: Beta-ketoacyl-[acyl-carrier-protein] synthase III (325 aa).

Active-site residues include Cys112 and His250. The segment at Gln251–Arg255 is ACP-binding. Asn280 is an active-site residue.

Belongs to the thiolase-like superfamily. FabH family. As to quaternary structure, homodimer.

The protein localises to the cytoplasm. The catalysed reaction is malonyl-[ACP] + acetyl-CoA + H(+) = 3-oxobutanoyl-[ACP] + CO2 + CoA. It functions in the pathway lipid metabolism; fatty acid biosynthesis. Catalyzes the condensation reaction of fatty acid synthesis by the addition to an acyl acceptor of two carbons from malonyl-ACP. Catalyzes the first condensation reaction which initiates fatty acid synthesis and may therefore play a role in governing the total rate of fatty acid production. Possesses both acetoacetyl-ACP synthase and acetyl transacylase activities. Its substrate specificity determines the biosynthesis of branched-chain and/or straight-chain of fatty acids. The sequence is that of Beta-ketoacyl-[acyl-carrier-protein] synthase III from Lactococcus lactis subsp. lactis (strain IL1403) (Streptococcus lactis).